The chain runs to 30 residues: uncharacterized protein (30 aa).

This is an uncharacterized protein from Saccharomyces cerevisiae (strain ATCC 204508 / S288c) (Baker's yeast).